The chain runs to 551 residues: Glucans biosynthesis protein D (551 aa).

A signal peptide (tat-type signal) is located at residues 1–32 (MDRRRFIKGSMAMAAVCGTSGIASLFSQAAFA).

Belongs to the OpgD/OpgG family. Post-translationally, predicted to be exported by the Tat system. The position of the signal peptide cleavage has not been experimentally proven.

It localises to the periplasm. It functions in the pathway glycan metabolism; osmoregulated periplasmic glucan (OPG) biosynthesis. Probably involved in the control of the structural glucose backbone of osmoregulated periplasmic glucans (OPGs). This Escherichia coli O139:H28 (strain E24377A / ETEC) protein is Glucans biosynthesis protein D.